The following is a 338-amino-acid chain: Anthranilate phosphoribosyltransferase (338 aa).

Residues Gly81, 84–85, Thr89, 91–94, 109–117, and Ser121 contribute to the 5-phospho-alpha-D-ribose 1-diphosphate site; these read GD, NVST, and KHGNRSVSS. Gly81 serves as a coordination point for anthranilate. A Mg(2+)-binding site is contributed by Ser93. Residue Asn112 coordinates anthranilate. Arg167 is an anthranilate binding site. Mg(2+) is bound by residues Asp226 and Glu227.

Belongs to the anthranilate phosphoribosyltransferase family. As to quaternary structure, homodimer. Mg(2+) is required as a cofactor.

It carries out the reaction N-(5-phospho-beta-D-ribosyl)anthranilate + diphosphate = 5-phospho-alpha-D-ribose 1-diphosphate + anthranilate. The protein operates within amino-acid biosynthesis; L-tryptophan biosynthesis; L-tryptophan from chorismate: step 2/5. Its function is as follows. Catalyzes the transfer of the phosphoribosyl group of 5-phosphorylribose-1-pyrophosphate (PRPP) to anthranilate to yield N-(5'-phosphoribosyl)-anthranilate (PRA). The sequence is that of Anthranilate phosphoribosyltransferase from Alkalilimnicola ehrlichii (strain ATCC BAA-1101 / DSM 17681 / MLHE-1).